A 377-amino-acid chain; its full sequence is Polar flagellin F (377 aa).

Coiled-coil stretches lie at residues 98-131 (QSAN…ETTS) and 302-339 (DSQR…IQDT).

Belongs to the bacterial flagellin family. As to quaternary structure, heteromer of multiple flagellin subunits including FlaA, FlaB/D, FlaC, FlaE and FlaF.

The protein resides in the secreted. The protein localises to the bacterial flagellum. Its function is as follows. Flagellin is the subunit protein which polymerizes to form the filaments of bacterial flagella. This chain is Polar flagellin F (flaF), found in Vibrio parahaemolyticus serotype O3:K6 (strain RIMD 2210633).